Reading from the N-terminus, the 183-residue chain is Heavy metal-associated isoprenylated plant protein 44 (183 aa).

In terms of domain architecture, HMA spans 50–113 (LQTVELKVRM…AVRRAGKRAE (64 aa)). Residues Cys61 and Cys64 each coordinate a metal cation. Cysteine methyl ester is present on Cys180. Cys180 carries S-farnesyl cysteine lipidation. A propeptide spans 181–183 (RLM) (removed in mature form).

Belongs to the HIPP family.

In terms of biological role, heavy-metal-binding protein. The chain is Heavy metal-associated isoprenylated plant protein 44 from Arabidopsis thaliana (Mouse-ear cress).